The sequence spans 480 residues: Prostacyclin synthase (480 aa).

The helical transmembrane segment at 1 to 21 (MMWTALLLVGLSILVIVLYGR) threads the bilayer. Substrate contacts are provided by residues Arg-104, Leu-110, Asn-277, 338-339 (TR), and Arg-362. Position 421 (Cys-421) interacts with heme.

Belongs to the cytochrome P450 family. Requires heme as cofactor.

It is found in the endoplasmic reticulum membrane. The catalysed reaction is prostaglandin H2 = prostaglandin I2. It carries out the reaction a hydroperoxyeicosatetraenoate = an oxoeicosatetraenoate + H2O. It catalyses the reaction (15S)-hydroperoxy-(5Z,8Z,11Z,13E)-eicosatetraenoate = 15-oxo-(5Z,8Z,11Z,13E)-eicosatetraenoate + H2O. The enzyme catalyses (15S)-hydroperoxy-(5Z,8Z,11Z,13E)-eicosatetraenoate + AH2 = (15S)-hydroxy-(5Z,8Z,11Z,13E)-eicosatetraenoate + A + H2O. In terms of biological role, catalyzes the isomerization of prostaglandin H2 to prostacyclin (= prostaglandin I2). Catalyzes the biosynthesis and metabolism of eicosanoids. Catalyzes the isomerization of prostaglandin H2 to prostacyclin (= prostaglandin I2), a potent mediator of vasodilation and inhibitor of platelet aggregation. Additionally, displays dehydratase activity, toward hydroperoxyeicosatetraenoates (HPETEs), especially toward (15S)-hydroperoxy-(5Z,8Z,11Z,13E)-eicosatetraenoate (15(S)-HPETE). The protein is Prostacyclin synthase of Danio rerio (Zebrafish).